A 72-amino-acid polypeptide reads, in one-letter code: Putative membrane protein insertion efficiency factor (72 aa).

It belongs to the UPF0161 family.

It is found in the cell inner membrane. Functionally, could be involved in insertion of integral membrane proteins into the membrane. The polypeptide is Putative membrane protein insertion efficiency factor (Myxococcus xanthus (strain DK1622)).